A 1023-amino-acid chain; its full sequence is Sodium/potassium-transporting ATPase subunit alpha-1 (1023 aa).

Residues 1–5 (MGKGV) constitute a propeptide that is removed on maturation. Positions 1–11 (MGKGVGRDKYE) are enriched in basic and acidic residues. The tract at residues 1–38 (MGKGVGRDKYEPAAVSEHGDKKSKKAKKERDMDELKKE) is disordered. Residues 6–87 (GRDKYEPAAV…NALTPPPTTP (82 aa)) lie on the Cytoplasmic side of the membrane. K9 bears the N6-acetyllysine mark. Y10 is modified (phosphotyrosine). Phosphoserine; by PKC is present on S16. An N6-acetyllysine modification is found at K21. S23 is modified (phosphoserine; by PKC). A compositionally biased stretch (basic and acidic residues) spans 28–38 (KERDMDELKKE). Phosphoserine occurs at positions 40 and 47. The tract at residues 82-84 (PPP) is phosphoinositide-3 kinase binding. Residues 88–108 (EWVKFCRQLFGGFSMLLWIGA) traverse the membrane as a helical segment. Over 109-131 (ILCFLAYGIRSATEEEPPNDDLY) the chain is Extracellular. The chain crosses the membrane as a helical span at residues 132-152 (LGVVLSAVVIITGCFSYYQEA). The Cytoplasmic segment spans residues 153-288 (KSSKIMESFK…GGQTPIAEEI (136 aa)). The segment at 216–235 (SSLTGESEPQTRSPDFTNEN) is disordered. Phosphoserine is present on S228. A Phosphotyrosine modification is found at Y260. A helical transmembrane segment spans residues 289 to 308 (EHFIHLITGVAVFLGVSFFI). At 309–320 (LSLILEYTWLEA) the chain is on the extracellular side. A helical transmembrane segment spans residues 321-338 (VIFLIGIIVANVPEGLLA). The Cytoplasmic segment spans residues 339 to 772 (TVTVCLTLTA…EEGRLIFDNL (434 aa)). The active-site 4-aspartylphosphate intermediate is D376. Residues S452 and S484 each carry the phosphoserine modification. Residue K487 participates in ATP binding. The residue at position 542 (Y542) is a Phosphotyrosine. The interval 596 to 717 (RAAVPDAVGK…QGAIVAVTGD (122 aa)) is mediates interaction with SCN7A. Residue K661 is modified to N6-succinyllysine. A phosphoserine mark is found at S668 and S675. Positions 717 and 721 each coordinate Mg(2+). A helical transmembrane segment spans residues 773 to 792 (KKSIAYTLTSNIPEITPFLI). Over 793–802 (FIIANIPLPL) the chain is Extracellular. The helical transmembrane segment at 803–823 (GTVTILCIDLGTDMVPAISLA) threads the bilayer. The Cytoplasmic segment spans residues 824–843 (YEQAESDIMKRQPRNPKTDK). The chain crosses the membrane as a helical span at residues 844–866 (LVNERLISMAYGQIGMIQALGGF). Residues 867 to 918 (FTYFVILAENGFLPFHLLGIRETWDDRWINDVEDSYGQQWTYEQRKIVEFTC) are Extracellular-facing. A helical membrane pass occupies residues 919-938 (HTAFFVSIVVVQWADLVICK). The Cytoplasmic segment spans residues 939–951 (TRRNSVFQQGMKN). S943 is modified (phosphoserine; by PKA). The helical transmembrane segment at 952-970 (KILIFGLFEETALAAFLSY) threads the bilayer. Residues 971 to 985 (CPGMGAALRMYPLKP) are Extracellular-facing. Residues 986–1006 (TWWFCAFPYSLLIFVYDEVRK) traverse the membrane as a helical segment. Over 1007–1023 (LIIRRRPGGWVEKETYY) the chain is Cytoplasmic.

The protein belongs to the cation transport ATPase (P-type) (TC 3.A.3) family. Type IIC subfamily. In terms of assembly, the sodium/potassium-transporting ATPase is composed of a catalytic alpha subunit, an auxiliary non-catalytic beta subunit and an additional regulatory subunit. Interacts with regulatory subunit FXYD1. Interacts with regulatory subunit FXYD3. Interacts with SLC35G1 and STIM1. Interacts with SIK1. Interacts with CLN3; this interaction regulates the sodium/potassium-transporting ATPase complex localization at the plasma membrane. Interacts with SCN7A; activates ATP1A1 P-type sodium:potassium-exchanging transporter activity which indirectly signals to nearby neurons to regulate sodium homeostasis. In terms of processing, phosphorylation on Tyr-10 modulates pumping activity. Phosphorylation of Ser-943 by PKA modulates the response of ATP1A1 to PKC. Dephosphorylation by protein phosphatase 2A (PP2A) following increases in intracellular sodium, leading to increase catalytic activity. As to expression, expressed in the central nervous system, in most motor and sensory axons of the ventral and dorsal roots, as well as in the large motor neurons of the ventral horn (at protein level).

It is found in the cell membrane. Its subcellular location is the basolateral cell membrane. The protein localises to the sarcolemma. The protein resides in the cell projection. It localises to the axon. It is found in the melanosome. The enzyme catalyses K(+)(out) + Na(+)(in) + ATP + H2O = K(+)(in) + Na(+)(out) + ADP + phosphate + H(+). Its function is as follows. This is the catalytic component of the active enzyme, which catalyzes the hydrolysis of ATP coupled with the exchange of sodium and potassium ions across the plasma membrane. This action creates the electrochemical gradient of sodium and potassium ions, providing the energy for active transport of various nutrients. Could also be part of an osmosensory signaling pathway that senses body-fluid sodium levels and controls salt intake behavior as well as voluntary water intake to regulate sodium homeostasis. The protein is Sodium/potassium-transporting ATPase subunit alpha-1 (Atp1a1) of Rattus norvegicus (Rat).